Here is a 266-residue protein sequence, read N- to C-terminus: Glucosamine-6-phosphate deaminase 1 (266 aa).

The Proton acceptor; for enolization step role is filled by Asp-67. The active-site For ring-opening step is Asn-136. His-138 acts as the Proton acceptor; for ring-opening step in catalysis. Glu-143 functions as the For ring-opening step in the catalytic mechanism.

This sequence belongs to the glucosamine/galactosamine-6-phosphate isomerase family. In terms of assembly, homohexamer.

It localises to the cytoplasm. The catalysed reaction is alpha-D-glucosamine 6-phosphate + H2O = beta-D-fructose 6-phosphate + NH4(+). In terms of biological role, catalyzes the reversible conversion of alpha-D-glucosamine 6-phosphate (GlcN-6P) into beta-D-fructose 6-phosphate (Fru-6P) and ammonium ion, a regulatory reaction step in de novo uridine diphosphate-N-acetyl-alpha-D-glucosamine (UDP-GlcNAc) biosynthesis via hexosamine pathway. The polypeptide is Glucosamine-6-phosphate deaminase 1 (GPI1) (Giardia intestinalis (Giardia lamblia)).